Here is a 243-residue protein sequence, read N- to C-terminus: Phosphatidylserine decarboxylase proenzyme (243 aa).

The active-site Schiff-base intermediate with substrate; via pyruvic acid is Ser212. Ser212 carries the pyruvic acid (Ser); by autocatalysis modification.

This sequence belongs to the phosphatidylserine decarboxylase family. PSD-A subfamily. As to quaternary structure, heterodimer of a large membrane-associated beta subunit and a small pyruvoyl-containing alpha subunit. Requires pyruvate as cofactor. Post-translationally, is synthesized initially as an inactive proenzyme. Formation of the active enzyme involves a self-maturation process in which the active site pyruvoyl group is generated from an internal serine residue via an autocatalytic post-translational modification. Two non-identical subunits are generated from the proenzyme in this reaction, and the pyruvate is formed at the N-terminus of the alpha chain, which is derived from the carboxyl end of the proenzyme. The post-translation cleavage follows an unusual pathway, termed non-hydrolytic serinolysis, in which the side chain hydroxyl group of the serine supplies its oxygen atom to form the C-terminus of the beta chain, while the remainder of the serine residue undergoes an oxidative deamination to produce ammonia and the pyruvoyl prosthetic group on the alpha chain.

It localises to the cell membrane. It catalyses the reaction a 1,2-diacyl-sn-glycero-3-phospho-L-serine + H(+) = a 1,2-diacyl-sn-glycero-3-phosphoethanolamine + CO2. Its pathway is phospholipid metabolism; phosphatidylethanolamine biosynthesis; phosphatidylethanolamine from CDP-diacylglycerol: step 2/2. Catalyzes the formation of phosphatidylethanolamine (PtdEtn) from phosphatidylserine (PtdSer). The sequence is that of Phosphatidylserine decarboxylase proenzyme from Mycobacterium leprae (strain Br4923).